A 316-amino-acid chain; its full sequence is Mannose-6-phosphate isomerase (316 aa).

4 residues coordinate Zn(2+): glutamine 95, histidine 97, glutamate 114, and histidine 171. The active site involves arginine 191.

The protein belongs to the mannose-6-phosphate isomerase type 1 family. Requires Zn(2+) as cofactor.

The catalysed reaction is D-mannose 6-phosphate = D-fructose 6-phosphate. The sequence is that of Mannose-6-phosphate isomerase (pmi) from Streptococcus mutans serotype c (strain ATCC 700610 / UA159).